A 67-amino-acid chain; its full sequence is ATP synthase protein 8 (67 aa).

A helical transmembrane segment spans residues 8-24; it reads TWSITIMSMIMTLFIVF. Lysine 54 carries the N6-acetyllysine; alternate modification. Lysine 54 is subject to N6-succinyllysine; alternate. Lysine 57 is modified (N6-acetyllysine).

It belongs to the ATPase protein 8 family. As to quaternary structure, F-type ATPases have 2 components, CF(1) - the catalytic core - and CF(0) - the membrane proton channel. Component of an ATP synthase complex composed of ATP5PB, ATP5MC1, ATP5F1E, ATP5PD, ATP5ME, ATP5PF, ATP5MF, MT-ATP6, MT-ATP8, ATP5F1A, ATP5F1B, ATP5F1D, ATP5F1C, ATP5PO, ATP5MG, ATP5MK and ATP5MJ. Interacts with PRICKLE3.

The protein resides in the mitochondrion membrane. In terms of biological role, mitochondrial membrane ATP synthase (F(1)F(0) ATP synthase or Complex V) produces ATP from ADP in the presence of a proton gradient across the membrane which is generated by electron transport complexes of the respiratory chain. F-type ATPases consist of two structural domains, F(1) - containing the extramembraneous catalytic core and F(0) - containing the membrane proton channel, linked together by a central stalk and a peripheral stalk. During catalysis, ATP synthesis in the catalytic domain of F(1) is coupled via a rotary mechanism of the central stalk subunits to proton translocation. Part of the complex F(0) domain. Minor subunit located with subunit a in the membrane. The polypeptide is ATP synthase protein 8 (MT-ATP8) (Felis silvestris lybica (African wildcat)).